Consider the following 311-residue polypeptide: Fructose-1,6-bisphosphatase class 1 (311 aa).

Mg(2+) is bound by residues Glu-90, Asp-110, Leu-112, and Asp-113. Substrate-binding positions include 113–116 (DGSS), Tyr-221, and Lys-251. Glu-257 serves as a coordination point for Mg(2+).

The protein belongs to the FBPase class 1 family. As to quaternary structure, homotetramer. It depends on Mg(2+) as a cofactor.

Its subcellular location is the cytoplasm. It catalyses the reaction beta-D-fructose 1,6-bisphosphate + H2O = beta-D-fructose 6-phosphate + phosphate. It participates in carbohydrate biosynthesis; gluconeogenesis. This Methanospirillum hungatei JF-1 (strain ATCC 27890 / DSM 864 / NBRC 100397 / JF-1) protein is Fructose-1,6-bisphosphatase class 1.